Here is an 834-residue protein sequence, read N- to C-terminus: Periplasmic nitrate reductase (834 aa).

Positions 1-32 (MTDMKIDRRQMLKLEAAAIAAAAAGMPSTSLA) form a signal peptide, tat-type signal. Residues 44–100 (LKWDKAACRFCGTGCSVMVATKDNRVVATHGDIKAEVNRGLNCVKGYFLSKIMYGHD) enclose the 4Fe-4S Mo/W bis-MGD-type domain. [4Fe-4S] cluster is bound by residues cysteine 51, cysteine 54, cysteine 58, and cysteine 86. Mo-bis(molybdopterin guanine dinucleotide)-binding positions include lysine 88, glutamine 155, asparagine 180, cysteine 184, 217–224 (WGSNMAEM), 248–252 (STFEH), 267–269 (QTD), methionine 378, glutamine 382, asparagine 488, 514–515 (SD), lysine 537, aspartate 564, and 724–733 (TGRVVEHWHS). Tryptophan 800 provides a ligand contact to substrate. Residues asparagine 808 and lysine 825 each coordinate Mo-bis(molybdopterin guanine dinucleotide).

It belongs to the prokaryotic molybdopterin-containing oxidoreductase family. NasA/NapA/NarB subfamily. As to quaternary structure, component of the periplasmic nitrate reductase NapAB complex composed of NapA and NapB. It depends on [4Fe-4S] cluster as a cofactor. Mo-bis(molybdopterin guanine dinucleotide) is required as a cofactor. Post-translationally, predicted to be exported by the Tat system. The position of the signal peptide cleavage has not been experimentally proven.

It is found in the periplasm. It catalyses the reaction 2 Fe(II)-[cytochrome] + nitrate + 2 H(+) = 2 Fe(III)-[cytochrome] + nitrite + H2O. Functionally, catalytic subunit of the periplasmic nitrate reductase complex NapAB. Receives electrons from NapB and catalyzes the reduction of nitrate to nitrite. In Bradyrhizobium sp. (strain BTAi1 / ATCC BAA-1182), this protein is Periplasmic nitrate reductase.